The chain runs to 46 residues: MEKIKKSYLLVAKLKFKYFCLKPYSLNSTTKFILKIIKNKSMLIFN.

The protein resides in the plastid. The protein localises to the chloroplast. This is an uncharacterized protein from Trieres chinensis (Marine centric diatom).